Consider the following 461-residue polypeptide: MTALFQQLPSVDKILKTPQGLQLITEFGHTAVVATCRELLTQARQFIKKNNQLPEYFSNFDRTFLEIHSHLQKQNQVQIKAVHNLTGTVLHTNLGRALWSEAAQQAALSAMQKNVSLEYDLDEGKRSHRDNYISELLCKLTGAEAACIVNNNAAAVLLMLATFAQGKEVIISRGELIEIGGAFRIPDIMEQAGCHLVEVGTTNRTHLKDYRNAITENTAFLMKVHSSNYQICGFTSSVSEEELTELGQEMNVPVVTDLGSGALVDLSQYGLPKEPTVQEKIAQGVDLVSFSGDKLLGGVQAGIIVGKKEWIEQLQAHPLKRVLRCDKVILAGLEATLRLYLNPEKLTEKLPTLRLLTQPLKQLKINAMRLKERLESRLNSQFELQIEASQAQIGSGSQPMERIPSVAVTIAEKTNAKLSALSARFKQLSQPIIGRMENGKIWLDLRSLADIETLLNTLDEL.

K294 carries the N6-(pyridoxal phosphate)lysine modification.

The protein belongs to the SelA family. Pyridoxal 5'-phosphate is required as a cofactor.

The protein localises to the cytoplasm. It catalyses the reaction L-seryl-tRNA(Sec) + selenophosphate + H(+) = L-selenocysteinyl-tRNA(Sec) + phosphate. The protein operates within aminoacyl-tRNA biosynthesis; selenocysteinyl-tRNA(Sec) biosynthesis; selenocysteinyl-tRNA(Sec) from L-seryl-tRNA(Sec) (bacterial route): step 1/1. Its function is as follows. Converts seryl-tRNA(Sec) to selenocysteinyl-tRNA(Sec) required for selenoprotein biosynthesis. The protein is L-seryl-tRNA(Sec) selenium transferase of Haemophilus influenzae (strain ATCC 51907 / DSM 11121 / KW20 / Rd).